The primary structure comprises 198 residues: 3-isopropylmalate dehydratase small subunit (198 aa).

This sequence belongs to the LeuD family. LeuD type 1 subfamily. Heterodimer of LeuC and LeuD.

The enzyme catalyses (2R,3S)-3-isopropylmalate = (2S)-2-isopropylmalate. It participates in amino-acid biosynthesis; L-leucine biosynthesis; L-leucine from 3-methyl-2-oxobutanoate: step 2/4. In terms of biological role, catalyzes the isomerization between 2-isopropylmalate and 3-isopropylmalate, via the formation of 2-isopropylmaleate. The chain is 3-isopropylmalate dehydratase small subunit from Corynebacterium jeikeium (strain K411).